The sequence spans 36 residues: Photosystem II reaction center protein M (36 aa).

Methionine 1 bears the Blocked amino end (Met) mark. The Lumenal portion of the chain corresponds to 1-11; it reads MEVNQLGFIAT. A helical membrane pass occupies residues 12-27; the sequence is ALFVLVPSVFLIILYV. Topologically, residues 28–36 are cytoplasmic; the sequence is QTESQQKSS.

Belongs to the PsbM family. In terms of assembly, PSII is composed of 1 copy each of membrane proteins PsbA, PsbB, PsbC, PsbD, PsbE, PsbF, PsbH, PsbI, PsbJ, PsbK, PsbL, PsbM, PsbT, PsbX, PsbY, PsbZ, Psb30/Ycf12, peripheral proteins PsbO, CyanoQ (PsbQ), PsbU, PsbV, PsbU, PsbV and a large number of cofactors. It forms dimeric complexes. PSII binds multiple chlorophylls, carotenoids and specific lipids. is required as a cofactor.

Its subcellular location is the cellular thylakoid membrane. One of the components of the core complex of photosystem II (PSII). PSII is a light-driven water:plastoquinone oxidoreductase that uses light energy to abstract electrons from H(2)O, generating O(2) and a proton gradient subsequently used for ATP formation. It consists of a core antenna complex that captures photons, and an electron transfer chain that converts photonic excitation into a charge separation. This subunit is found at the monomer-monomer interface. Probably involved in dimerization of PSII; at the monomer-monomer interface the only protein-protein contacts observed are between the 2 PsbM subunits. Lipids, chlorophylls and carotenoids contribute strongly to PSII dimerization. The polypeptide is Photosystem II reaction center protein M (Thermostichus vulcanus (Synechococcus vulcanus)).